The sequence spans 1035 residues: MSGSYPFIDIAALDSVREGFARGDAQLVLAHDLSTVLWVNGPGAKLFGYNRVEDLIEGQLDLPVATRRQIAAFSSENTSAPSAVAVRLGGGLRSELTHLHVSNIKLPDGVAALLVATQMPDNSAEAAISGLGDDSTHIALVDAVGKVVAASPRFALLDISASTLEDLIVEAGDATDRIVKRRIRTGSHSVPGAIARLTDTPALHLLCIVGDAPAQFQTAAEAVPLPDNAEAVLEEILPEQGDAPAQQAQKTHAEQPRPKTFAFDHDAPPARFIWKVGPDGTFSEISPDLAAVVGPNSADIVGRRFSDVANVFGFDTDGSIAALLLERDTWSGKRLLWPVEGTRLRVPVELAALPVYSRDREFLGFRGFGIVRPAEAEADPEEIGLALAGGIPQNRKPRKEPAETARMVGEDDVLALSEEVANDDHPAAVLPKPPLDITPTPGRRDSDKVISLLNSCAQEKVAANQAKFLKEKERATRPEGGLTKTERNAFREIAERLRKQGLANTRAESETPVSETSSIEPVEPTPPVKTRSEPIQPDETALLANLPVPVIIHSGDAIHYVNQALLDITGYESLDDIRSAGGVDVLFNSESDDGETRQSMVLRHADGSEEPVDAHLNAIAWRGGRALMLSLMPVTAADLPAPAELPAANDEEKQALEAHVEELKTILDTATDGVVLIDPEGRIRSMNHSASALFGYERDEAEGKFFSMLFAIESQRAAMDYLHGLSGNGVLSVLNDGREVIGREAKGGFIPLFMTIGKLPHTRGFCAVLRDITQWKRTEEELTNARKEAERASNQKTEFLARISHEIRTPLNAIIGFSELMADEKFGPIGNDRYRDYLRDINRSGNHVLALVNDLLDISKIEAGALDMQFEAVSLNDAIGEAIALMQPQANRERVIIRSSFQSNLPDIVADSRSIKQVALNLLSNAVRFTAPGGQVIVSTSYELNGDVVMRVRDTGIGMSKSEVEQALKPFRQINALERRKAESAKDWRNEGTGLGLPLTKAMVEANRAQFAIDSNPGQGTVVEIVFPPTRVLAD.

Residues 1 to 613 (MSGSYPFIDI…HADGSEEPVD (613 aa)) are important for polar localization. The disordered stretch occupies residues 500 to 533 (QGLANTRAESETPVSETSSIEPVEPTPPVKTRSE). The segment at 614 to 1035 (AHLNAIAWRG…VFPPTRVLAD (422 aa)) is interaction with DivK. The PAS domain occupies 659–730 (HVEELKTILD…YLHGLSGNGV (72 aa)). The Histidine kinase domain occupies 802-1031 (RISHEIRTPL…VVEIVFPPTR (230 aa)). Position 805 is a phosphohistidine; by autocatalysis (histidine 805).

In terms of assembly, interacts with DivK.

The protein resides in the cytoplasm. It catalyses the reaction ATP + protein L-histidine = ADP + protein N-phospho-L-histidine.. Its function is as follows. Functions as a polar differentiation marker. Essential protein that, by localizing in the old pole of dividing cells, controls cell division and maturation, probably through control of DivK phosphorylation status and cellular distribution, which in turn regulates CtrA, a transcriptional regulator of the minB operon. The asymmetrical localization of this protein is probably required for cells to enter a new division cycle. The sequence is that of Cell-division control histidine kinase PdhS (pdhS) from Brucella melitensis biotype 1 (strain ATCC 23456 / CCUG 17765 / NCTC 10094 / 16M).